Consider the following 1188-residue polypeptide: Zinc finger SWIM domain-containing protein 5 (1188 aa).

A compositionally biased stretch (basic and acidic residues) spans 1 to 10 (MAEGGEREEL). 2 disordered regions span residues 1–46 (MAEG…GAGG) and 123–171 (AGAA…TGTA). 2 stretches are compositionally biased toward low complexity: residues 126 to 136 (AAGAAGASPVE) and 146 to 155 (AAPAGSAPGA). The span at 156 to 171 (AGAGSSPGLGAGTGTA) shows a compositional bias: gly residues. The segment at 222–259 (YKVAISFDRCKITSVSCGCGNKDIFYCAHVVALSLYRI) adopts an SWIM-type zinc-finger fold.

The sequence is that of Zinc finger SWIM domain-containing protein 5 (Zswim5) from Mus musculus (Mouse).